Reading from the N-terminus, the 776-residue chain is MSVLGFDIGNLNCYIGVARQGGIEVITNDYSLHATPACVSFGPKDRSMGVAARQAVTTNIKNTVINFKHLIGRKFSDPVAQRFIPFIPCKVVKLPNDDIGVQVSYLGEPHTFTPEQVLAALLTKLRTIVESQLSDVKKVSDCVLAVPSYFTDVQRRAVLSAIQYAGLNSLRIVNETTAIALAYGIYKQDLPEEDAKSRNVVFLDIGHSSTQASLVAFNRGKLQMVNTSYDLESGGIWFDALIREHFRKEFKTKYGIDAATSPRPWLRLLDECERVKKQMSANQTPIPLNIECFMEDKDVTGKMQRQEFEDLAAPIFNRIKQVLINLFADGVSIKPEEIDEIEIVGGSSRIPMIREIVKDLFGKEPKTTMNQDEAVARGAAMQCAILSPTFRVREFAIKDTQPYRIRLSWNSTGENGGENDVFSPRDEVPFSKLVSLLRSGPFNVEAHYAQPNVVPHNQVHIGSWKVNGARPGADGGNQKVKVKVRVNPDGIFTIASATMYEPRIVEEVPAEAMEVDGDAKTEAPAEPLEPVKKTKLVPVDLEVIESIPVSYDVQKFHNLELQMQESDAREKAKADAKNSLEEYVYEMRDKVSDQYAEFITPAAADEFRSVLTSTEDWLYDEGEDAERDVYEKRLSELKAVGTPVVERYRESETRKPAFDSFDQSIMRVRKAYEDYANGGPTYAHLDSKEMEKVINAIEDKKKWLDEARHKQETRSKTDAPVVFTEEILQNKNVFENVVNPILNKKKPAAPAPPKKEEPQPAAGDQPQSQPGEMDVD.

The segment at 741–776 (ILNKKKPAAPAPPKKEEPQPAAGDQPQSQPGEMDVD) is disordered.

Belongs to the heat shock protein 70 family.

The chain is Heat shock protein 110 from Caenorhabditis elegans.